The following is a 119-amino-acid chain: Acidic phospholipase A2 DE-II (119 aa).

7 disulfides stabilise this stretch: cysteine 11–cysteine 72, cysteine 26–cysteine 118, cysteine 28–cysteine 44, cysteine 43–cysteine 99, cysteine 50–cysteine 92, cysteine 60–cysteine 85, and cysteine 79–cysteine 90. Positions 27, 29, and 31 each coordinate Ca(2+). Histidine 47 is an active-site residue. Aspartate 48 lines the Ca(2+) pocket. The active site involves aspartate 93.

It belongs to the phospholipase A2 family. Group I subfamily. D49 sub-subfamily. Requires Ca(2+) as cofactor. In terms of tissue distribution, expressed by the venom gland.

The protein localises to the secreted. The enzyme catalyses a 1,2-diacyl-sn-glycero-3-phosphocholine + H2O = a 1-acyl-sn-glycero-3-phosphocholine + a fatty acid + H(+). Its function is as follows. PLA2 catalyzes the calcium-dependent hydrolysis of the 2-acyl groups in 3-sn-phosphoglycerides. The protein is Acidic phospholipase A2 DE-II of Naja melanoleuca (Forest cobra).